We begin with the raw amino-acid sequence, 103 residues long: Protamine-3 (103 aa).

Residues 1 to 103 form a disordered region; it reads MGSRCAKLNT…QSPEPKRTPS (103 aa). The segment covering 10–21 has biased composition (low complexity); the sequence is TGQSPGHSPGHS. Acidic residues predominate over residues 50 to 66; sequence GEEEEEEEEEGEEEEKE. Residues 78–90 are compositionally biased toward basic and acidic residues; it reads EPERQEEGHKDNA. A Phosphoserine modification is found at Ser95.

This sequence belongs to the protamine P3 family.

Its subcellular location is the nucleus. The protein localises to the chromosome. Protamines substitute for histones in the chromatin of sperm during the haploid phase of spermatogenesis. They compact sperm DNA into a highly condensed, stable and inactive complex. The sequence is that of Protamine-3 (PRM3) from Homo sapiens (Human).